A 338-amino-acid chain; its full sequence is GTPase Obg (338 aa).

The Obg domain occupies Met1–Met159. An OBG-type G domain is found at Ala160–Trp331. GTP is bound by residues Gly166–Ser173, Phe191–Lys195, Asp213–Gly216, Asn283–Asp286, and Ser312–Ala314. Residues Ser173 and Thr193 each contribute to the Mg(2+) site.

This sequence belongs to the TRAFAC class OBG-HflX-like GTPase superfamily. OBG GTPase family. Monomer. It depends on Mg(2+) as a cofactor.

The protein resides in the cytoplasm. An essential GTPase which binds GTP, GDP and possibly (p)ppGpp with moderate affinity, with high nucleotide exchange rates and a fairly low GTP hydrolysis rate. Plays a role in control of the cell cycle, stress response, ribosome biogenesis and in those bacteria that undergo differentiation, in morphogenesis control. The sequence is that of GTPase Obg from Geotalea uraniireducens (strain Rf4) (Geobacter uraniireducens).